We begin with the raw amino-acid sequence, 473 residues long: Eukaryotic translation initiation factor 2 subunit gamma (473 aa).

The region spanning Q40–Y250 is the tr-type G domain. Positions G49–S56 are G1. A52–S57 lines the GTP pocket. Residues N77–K81 form a G2 region. Positions D135 to G138 are G3. GTP is bound by residues N193–D196 and S228–Q230. Positions N193–D196 are G4. A G5 region spans residues S228–Q230. An interacts with CDC123 region spans residues G458–V470.

It belongs to the TRAFAC class translation factor GTPase superfamily. Classic translation factor GTPase family. EIF2G subfamily. Eukaryotic translation initiation factor 2 eIF2 is a heterotrimeric complex composed of an alpha, a beta and a gamma subunit. The factors eIF-1, eIF-2, eIF-3, TIF5/eIF-5 and methionyl-tRNAi form a multifactor complex (MFC) that may bind to the 40S ribosome.

The protein resides in the cytoplasm. Its subcellular location is the cytosol. The catalysed reaction is GTP + H2O = GDP + phosphate + H(+). In terms of biological role, as a subunit of eukaryotic initiation factor 2 eIF2, involved in the early steps of protein synthesis. In the presence of GTP, eIF-2 forms a ternary complex with initiator tRNA Met-tRNAi and then recruits the 40S ribosomal complex and initiation factors eIF-1, eIF-1A and eIF-3 to form the 43S pre-initiation complex (43S PIC), a step that determines the rate of protein translation. The 43S PIC binds to mRNA and scans downstream to the initiation codon, where it forms a 48S initiation complex by codon-anticodon base pairing. This leads to the displacement of eIF-1 to allow GTPase-activating protein (GAP) eIF-5-mediated hydrolysis of eIF2-bound GTP. Hydrolysis of GTP and release of Pi, which makes GTP hydrolysis irreversible, causes the release of the eIF-2-GDP binary complex from the 40S subunit, an event that is essential for the subsequent joining of the 60S ribosomal subunit to form an elongation-competent 80S ribosome. In order for eIF-2 to recycle and catalyze another round of initiation, the GDP bound to eIF-2 must be exchanged with GTP by way of a reaction catalyzed by GDP-GTP exchange factor (GEF) eIF-2B. In Cryptococcus neoformans var. grubii serotype A (strain H99 / ATCC 208821 / CBS 10515 / FGSC 9487) (Filobasidiella neoformans var. grubii), this protein is Eukaryotic translation initiation factor 2 subunit gamma.